The primary structure comprises 470 residues: Coproporphyrinogen III oxidase (470 aa).

Residues 12 to 17 (GGGITG), 41 to 42 (EA), K49, 63 to 66 (GPDS), V256, W409, and 448 to 450 (VGI) each bind FAD.

The protein belongs to the protoporphyrinogen/coproporphyrinogen oxidase family. Coproporphyrinogen III oxidase subfamily. As to quaternary structure, monomer. FAD is required as a cofactor.

Its subcellular location is the cytoplasm. The protein resides in the cell membrane. The enzyme catalyses coproporphyrinogen III + 3 O2 = coproporphyrin III + 3 H2O2. It functions in the pathway porphyrin-containing compound metabolism; protoheme biosynthesis. Only weakly inhibited by acifluorfen, in contrast to eukaryotic family members. Weakly inhibited by methylacifluorfen. Bilirubin, biliverdin and hemin are all competitive inhibitors. Involved in coproporphyrin-dependent heme b biosynthesis. Catalyzes the oxidation of coproporphyrinogen III to coproporphyrin III. Can also oxidize protoporphyrinogen IX to protoporphyrin-IX. The specific activity for the oxidation of coproporphyrinogen III is much higher than that for the oxidation of protoporphyrinogen IX. Can also oxidize mesoporphyrinogen IX, but not uroporphyrinogen III. The polypeptide is Coproporphyrinogen III oxidase (Bacillus subtilis (strain 168)).